We begin with the raw amino-acid sequence, 293 residues long: Pyridoxal 5'-phosphate synthase subunit PdxS (293 aa).

Asp-23 is a D-ribose 5-phosphate binding site. Lys-80 serves as the catalytic Schiff-base intermediate with D-ribose 5-phosphate. Gly-152 lines the D-ribose 5-phosphate pocket. Residue Arg-164 coordinates D-glyceraldehyde 3-phosphate. Residues Gly-213 and 234–235 each bind D-ribose 5-phosphate; that span reads GS.

This sequence belongs to the PdxS/SNZ family. In terms of assembly, in the presence of PdxT, forms a dodecamer of heterodimers.

The catalysed reaction is aldehydo-D-ribose 5-phosphate + D-glyceraldehyde 3-phosphate + L-glutamine = pyridoxal 5'-phosphate + L-glutamate + phosphate + 3 H2O + H(+). It functions in the pathway cofactor biosynthesis; pyridoxal 5'-phosphate biosynthesis. Functionally, catalyzes the formation of pyridoxal 5'-phosphate from ribose 5-phosphate (RBP), glyceraldehyde 3-phosphate (G3P) and ammonia. The ammonia is provided by the PdxT subunit. Can also use ribulose 5-phosphate and dihydroxyacetone phosphate as substrates, resulting from enzyme-catalyzed isomerization of RBP and G3P, respectively. The chain is Pyridoxal 5'-phosphate synthase subunit PdxS from Dehalococcoides mccartyi (strain ATCC BAA-2266 / KCTC 15142 / 195) (Dehalococcoides ethenogenes (strain 195)).